Consider the following 1007-residue polypeptide: MEQAGTRPAATEHPRLRRPMPWLLLLPLLLLLLLLLPGPAASQLRYSVPEEQAPGALVGNVARALGLELRRLGPGCLRINHLGAPSPRYLELDLTSGALFVNERIDREALCEQRPRCLLSLEVLAHNPVAVSAVEVEILDINDNSPRFPRPNYQLQVSESVAPGARFHIESAQDPDVGANSVQTYELSPSEHFELDLKPLQENSKVLELVLRKGLDREQAALHHLVLTAVDGGIPARSGTAQISVRVLDTNDNSPAFDQSTYRVQLREDSPPGTLVVKLNASDPDEGSNGELRYSLSSYTSDRERQLFSIDASTGEVRVIGGLDYEEASSYQIYVQATDRGPVPMAGHCKVLVDIVDVNDNAPEVVLTDLYSPVPENATPNTIVAVLSVNDQDSGPNRKVSLGLEATLPFRLNGFGNSYTLVVSGPLDRERVAVYNITVTATDGGIPQLTSLRTLKVEISDINDNPPSFLEDSYSIYIQENNLPGVLLCTVQATDPDEKENAEVTYSLLEREIQGLPVTSYVSINSASGSLYAVNSFDYEKFREFFVTVEAQDKGNPPLSSTGTANVYVVDMNDHAPHILYPSSTNSSAAFEMGPRTAPAGYLVTKVIAMDSDSGQNAWLFYHLAQTSDLDLFKVELHTGEIRTTRKMGDESGSTFNLTVVVRDNGEPSLSASVAITVAVVDRVSKILPDTQRHVKSPRTYSEITLYLIIALSTVSFIFLLTIIILSIIKCYRYTAYGTACCGGFCGVRERSPAELYKQANNNIDARIPHGLKVQPHFIEVRGNGSLTKTYCYKACLTAGSGSDTFMFYNTGAQTGPGPSGAQAAVTDSRNLTGQSGQNAGNLIILKNEAVSQNEPRQPNPDWRYSASLRAGMHSSVHLEEAGILRAGPGGPDQQWPTVSSATPEPEAGEVSPPVGAGVNSNSWTFKYGPGNPKQSGPGELPDKFIIPGSPAIISIRQEPANSQIDKSDFITFGKKEETKKKKKKKKGNKTQEKKEKGNSTTDNSDQ.

The signal sequence occupies residues 1-42 (MEQAGTRPAATEHPRLRRPMPWLLLLPLLLLLLLLLPGPAAS). Cadherin domains lie at 43-148 (QLRY…SPRF), 149-257 (PRPN…SPAF), 258-365 (DQST…APEV), 374-469 (VPEN…PPSF), and 470-579 (LEDS…APHI). Topologically, residues 43-708 (QLRYSVPEEQ…RTYSEITLYL (666 aa)) are extracellular. Asparagine 280 and asparagine 436 each carry an N-linked (GlcNAc...) asparagine glycan. N-linked (GlcNAc...) asparagine glycosylation is found at asparagine 586 and asparagine 657. A Cadherin 6 domain is found at 594-691 (GPRTAPAGYL…DRVSKILPDT (98 aa)). A helical membrane pass occupies residues 709-729 (IIALSTVSFIFLLTIIILSII). At 730-1007 (KCYRYTAYGT…GNSTTDNSDQ (278 aa)) the chain is on the cytoplasmic side. PXXP repeat units lie at residues 856–859 (PRQP), 889–892 (PGGP), 930–933 (PGNP), and 948–951 (PGSP). The 4 X 4 AA repeats of P-X-X-P stretch occupies residues 856–951 (PRQPNPDWRY…PDKFIIPGSP (96 aa)). The disordered stretch occupies residues 885-1007 (LRAGPGGPDQ…GNSTTDNSDQ (123 aa)). Basic and acidic residues predominate over residues 966 to 980 (DKSDFITFGKKEETK).

It is found in the cell membrane. Its function is as follows. Potential calcium-dependent cell-adhesion protein. May be involved in the establishment and maintenance of specific neuronal connections in the brain. This chain is Protocadherin alpha-C2 (PCDHAC2), found in Pan troglodytes (Chimpanzee).